A 1024-amino-acid polypeptide reads, in one-letter code: Seizure 6-like protein (1024 aa).

A signal peptide spans 1 to 28; that stretch reads MPAARPPAAGLRGISLFLALLLGSPAAA. Residues 29 to 958 are Extracellular-facing; sequence LERDALPEGD…ETSLEGGNMA (930 aa). Disordered stretches follow at residues 33–77, 108–184, and 212–234; these read ALPE…SQSA, RPKH…EVPL, and AHTL…EAPQ. Residue Ser49 is glycosylated (O-linked (GalNAc...) serine). Over residues 56-66 the composition is skewed to basic and acidic residues; that stretch reads SPGKEHPEERV. Residues 110-120 are compositionally biased toward basic residues; sequence KHALPPKKKLP. Residues 138-162 show a composition bias toward polar residues; the sequence is SAATVQRAGSQPASQGLDLLSSSTE. O-glycosylated at one site regions lie at residues 147 to 161 and 176 to 180; these read SQPA…SSST and SEEAS. Cys281 and Cys308 are joined by a disulfide. A CUB 1 domain is found at 281–389; the sequence is CSVSFSNPEG…GTFQLHYQAF (109 aa). N-linked (GlcNAc...) asparagine glycosylation is found at Asn311, Asn328, and Asn350. Positions 391 to 450 constitute a Sushi 1 domain; that stretch reads LSCNFPRRPDSGDVTVMDLHSGGVAHFHCHLGYELQGAKMLTCINASKPHWSSQEPICSA. Cystine bridges form between Cys393–Cys433 and Cys419–Cys448. Residues Asn435, Asn458, Asn474, Asn514, Asn576, Asn618, Asn674, and Asn742 are each glycosylated (N-linked (GlcNAc...) asparagine). Positions 452 to 562 constitute a CUB 2 domain; the sequence is CGGAVHNATI…STFNIRFEAF (111 aa). The region spanning 565–626 is the Sushi 2 domain; it reads GHCYEPYIQN…WNDTEPLCRA (62 aa). 2 disulfide bridges follow: Cys567–Cys609 and Cys594–Cys624. Residues 628 to 739 form the CUB 3 domain; sequence CGGELSAVAG…QGFIMNYIEV (112 aa). Sushi domains are found at residues 743–802, 804–867, and 871–932; these read DSCS…FCEK, MYCT…HCVS, and LACD…VCKV. Disulfide bonds link Cys745–Cys787, Cys773–Cys800, Cys806–Cys848, Cys834–Cys865, Cys873–Cys915, and Cys901–Cys930. Residues 959-979 traverse the membrane as a helical segment; sequence LAIFIPVLIISLLLGGAYIYI. The Cytoplasmic portion of the chain corresponds to 980–1024; it reads TRCRYYSNLRLPLMYSHPYSQITVETEFDNPIYETGETREYEVSI.

The protein belongs to the SEZ6 family. O-glycosylated. Widely expressed, including adult and fetal brains and lungs. Not expressed in all lung cancer cell lines.

Its subcellular location is the endoplasmic reticulum membrane. Functionally, may contribute to specialized endoplasmic reticulum functions in neurons. The polypeptide is Seizure 6-like protein (SEZ6L) (Homo sapiens (Human)).